We begin with the raw amino-acid sequence, 88 residues long: MSIMDHSPTTGVVTVIVILIAIAALGALILGCWCYLRLQRISQSEDEESIVGDGETKEPFLLVQYSAKGPCVERKAKLMTANSPEVHG.

Residues 1-10 (MSIMDHSPTT) lie on the Mitochondrial intermembrane side of the membrane. Residues 11–31 (GVVTVIVILIAIAALGALILG) form a helical membrane-spanning segment. The Cytoplasmic portion of the chain corresponds to 32–88 (CWCYLRLQRISQSEDEESIVGDGETKEPFLLVQYSAKGPCVERKAKLMTANSPEVHG). Ser-49 and Ser-83 each carry phosphoserine.

This sequence belongs to the stannin family. As to quaternary structure, monomer.

The protein resides in the mitochondrion outer membrane. Functionally, plays a role in the toxic effects of organotins. Plays a role in endosomal maturation. The protein is Stannin (Snn) of Mus musculus (Mouse).